Consider the following 201-residue polypeptide: Peptidyl-tRNA hydrolase (201 aa).

Tyr17 serves as a coordination point for tRNA. Catalysis depends on His22, which acts as the Proton acceptor. Residues Tyr68, Asn70, and Asn116 each contribute to the tRNA site.

The protein belongs to the PTH family. Monomer.

The protein localises to the cytoplasm. The enzyme catalyses an N-acyl-L-alpha-aminoacyl-tRNA + H2O = an N-acyl-L-amino acid + a tRNA + H(+). Its function is as follows. Hydrolyzes ribosome-free peptidyl-tRNAs (with 1 or more amino acids incorporated), which drop off the ribosome during protein synthesis, or as a result of ribosome stalling. Functionally, catalyzes the release of premature peptidyl moieties from peptidyl-tRNA molecules trapped in stalled 50S ribosomal subunits, and thus maintains levels of free tRNAs and 50S ribosomes. The sequence is that of Peptidyl-tRNA hydrolase from Lawsonia intracellularis (strain PHE/MN1-00).